A 258-amino-acid chain; its full sequence is Protein T1 (258 aa).

The N-terminal stretch at 1 to 17 is a signal peptide; it reads MRRLCIILLVYVYATFA. N-linked (GlcNAc...) asparagine; by host glycans are attached at residues Asn-67, Asn-151, and Asn-172.

The protein belongs to the poxviruses A41 family.

In Rabbit fibroma virus (strain Kasza) (RFV), this protein is Protein T1.